Consider the following 729-residue polypeptide: Transient receptor potential cation channel subfamily V member 5 (729 aa).

At 1–327 the chain is on the cytoplasmic side; sequence MGGFLPKAEG…SFKWNKYGRP (327 aa). ANK repeat units lie at residues 44–74, 78–107, 116–145, 162–191, 195–228, and 239–268; these read ILES…DVRQ, LGET…ELVF, AGQT…SVSA, FGEH…DIRA, LGNT…HGDH, and QGLT…HIQW. The helical transmembrane segment at 328 to 348 threads the bilayer; that stretch reads YFCILAALYLLYMICFTTCCV. The Extracellular segment spans residues 349-385; it reads YRPLKFRGGNRTHSRDITILQQKLLQEAYETREDIIR. Asn358 carries N-linked (GlcNAc...) asparagine glycosylation. Residues 386–408 form a helical membrane-spanning segment; it reads LVGELVSIVGAVIILLLEIPDIF. The Cytoplasmic portion of the chain corresponds to 409–419; the sequence is RVGASRYFGKT. Residues 420–442 form a helical membrane-spanning segment; the sequence is ILGGPFHVIIITYASLVLVTMVM. Residues 443–448 lie on the Extracellular side of the membrane; the sequence is RLTNTN. The helical transmembrane segment at 449-469 threads the bilayer; sequence GEVVPMSFALVLGWCSVMYFT. At 470–492 the chain is on the cytoplasmic side; that stretch reads RGFQMLGPFTIMIQKMIFGDLMR. The chain crosses the membrane as a helical span at residues 493 to 513; the sequence is FCWLMAVVILGFASAFYIIFQ. Residues 524–544 constitute an intramembrane region (pore-forming); that stretch reads YDYPMALFTTFELFLTVIDAP. Position 542 (Asp542) interacts with Ca(2+). The helical transmembrane segment at 557–577 threads the bilayer; the sequence is IVNFAFTIIATLLMLNLFIAM. Residues 578–729 are Cytoplasmic-facing; it reads MGDTHWRVAQ…EGDGEEVYHF (152 aa). Residues 598 to 602 are interaction with S100A10; it reads VATTV. Positions 650–653 are involved in Ca(2+)-dependent inactivation; it reads VFKN. The span at 654–665 shows a compositional bias: basic and acidic residues; that stretch reads SDKEDDQEHPSE. A disordered region spans residues 654–675; that stretch reads SDKEDDQEHPSEKQPSGAESGT. Position 685 is a phosphothreonine (Thr685). Ser689 carries the phosphoserine modification. The tract at residues 700–729 is involved in Ca(2+)-dependent inactivation; the sequence is GWEILRQNTLGHLNLGLNLSEGDGEEVYHF.

Belongs to the transient receptor (TC 1.A.4) family. TrpV subfamily. TRPV5 sub-subfamily. In terms of assembly, homotetramer and probably heterotetramer with TRPV6. Interacts with TRPV6. Interacts with S100A10 and probably with the ANAX2-S100A10 heterotetramer. The interaction with S100A10 is required for the trafficking to the plasma membrane. Interacts with calmodulin. Interacts with BSPRY, which results in its inactivation. Glycosylated. Expressed at high levels in kidney, small intestine and pancreas, and at lower levels in testis, prostate, placenta, brain, colon and rectum.

It is found in the apical cell membrane. It catalyses the reaction Ca(2+)(in) = Ca(2+)(out). With respect to regulation, activated by WNK3. Its function is as follows. Constitutively active calcium selective cation channel thought to be involved in Ca(2+) reabsorption in kidney and intestine. Required for normal Ca(2+) reabsorption in the kidney distal convoluted tubules. The channel is activated by low internal calcium level and the current exhibits an inward rectification. A Ca(2+)-dependent feedback regulation includes fast channel inactivation and slow current decay. Heteromeric assembly with TRPV6 seems to modify channel properties. TRPV5-TRPV6 heteromultimeric concatemers exhibit voltage-dependent gating. The polypeptide is Transient receptor potential cation channel subfamily V member 5 (TRPV5) (Homo sapiens (Human)).